A 236-amino-acid polypeptide reads, in one-letter code: Mitochondrial inner membrane protease ATP23 (236 aa).

H136 contacts a divalent metal cation. Residue E137 is part of the active site. H140 is an a divalent metal cation binding site.

It belongs to the peptidase M76 family.

Its subcellular location is the mitochondrion inner membrane. In terms of biological role, has a dual role in the assembly of mitochondrial ATPase. Acts as a protease that removes N-terminal residues of mitochondrial ATPase CF(0) subunit 6 at the intermembrane space side. Also involved in the correct assembly of the membrane-embedded ATPase CF(0) particle, probably mediating association of subunit 6 with the subunit 9 ring. In Debaryomyces hansenii (strain ATCC 36239 / CBS 767 / BCRC 21394 / JCM 1990 / NBRC 0083 / IGC 2968) (Yeast), this protein is Mitochondrial inner membrane protease ATP23 (ATP23).